Consider the following 197-residue polypeptide: Probable GTP-binding protein EngB (197 aa).

One can recognise an EngB-type G domain in the interval 22 to 195 (NLPEIAFVGR…VDYLFDDLVE (174 aa)). GTP is bound by residues 30–37 (GRSNVGKS), 57–61 (GKTRL), 75–78 (DLPG), 142–145 (TKSD), and 174–176 (FSS). Mg(2+) contacts are provided by serine 37 and threonine 59.

The protein belongs to the TRAFAC class TrmE-Era-EngA-EngB-Septin-like GTPase superfamily. EngB GTPase family. Mg(2+) is required as a cofactor.

Functionally, necessary for normal cell division and for the maintenance of normal septation. The protein is Probable GTP-binding protein EngB of Clostridium perfringens (strain 13 / Type A).